A 315-amino-acid chain; its full sequence is Alpha- and gamma-adaptin-binding protein p34 (315 aa).

Positions 197–233 (IGSADPCHPEQPHLPAADRTESLSDHRGGASNTTDAQ) are disordered. Basic and acidic residues predominate over residues 203–224 (CHPEQPHLPAADRTESLSDHRG). 2 positions are modified to phosphoserine: S310 and S311.

As to quaternary structure, associated with AP-1 and AP-2 complexes.

It is found in the cytoplasm. Its subcellular location is the cytosol. In terms of biological role, may be involved in endocytic recycling of growth factor receptors such as EGFR. This is Alpha- and gamma-adaptin-binding protein p34 (AAGAB) from Pongo abelii (Sumatran orangutan).